A 183-amino-acid polypeptide reads, in one-letter code: Bifunctional protein PyrR (183 aa).

Positions 100–112 (VILVDDVLYTGRT) match the PRPP-binding motif.

It belongs to the purine/pyrimidine phosphoribosyltransferase family. PyrR subfamily.

The enzyme catalyses UMP + diphosphate = 5-phospho-alpha-D-ribose 1-diphosphate + uracil. Functionally, regulates the transcription of the pyrimidine nucleotide (pyr) operon in response to exogenous pyrimidines. Its function is as follows. Also displays a weak uracil phosphoribosyltransferase activity which is not physiologically significant. This chain is Bifunctional protein PyrR, found in Deinococcus deserti (strain DSM 17065 / CIP 109153 / LMG 22923 / VCD115).